We begin with the raw amino-acid sequence, 189 residues long: Small ribosomal subunit protein uS5 (189 aa).

The region spanning 22 to 85 (FVDKLVAINR…EAAKRDLIFV (64 aa)) is the S5 DRBM domain.

Belongs to the universal ribosomal protein uS5 family. As to quaternary structure, part of the 30S ribosomal subunit. Contacts proteins S4 and S8.

With S4 and S12 plays an important role in translational accuracy. In terms of biological role, located at the back of the 30S subunit body where it stabilizes the conformation of the head with respect to the body. The sequence is that of Small ribosomal subunit protein uS5 from Sinorhizobium fredii (strain NBRC 101917 / NGR234).